A 444-amino-acid chain; its full sequence is Elongation factor 1-alpha (444 aa).

The region spanning 15-238 (KPHINLAVVG…DSFQPPQRPV (224 aa)) is the tr-type G domain. Residues 24–31 (GHVDNGKS) are G1. 24–31 (GHVDNGKS) contributes to the GTP binding site. Serine 31 contributes to the Mg(2+) binding site. The G2 stretch occupies residues 80–84 (GVTIE). Positions 101 to 104 (DLPG) are G3. GTP contacts are provided by residues 101 to 105 (DLPGH) and 163 to 166 (NKMD). The segment at 163–166 (NKMD) is G4. Residues 202–204 (SAI) form a G5 region.

It belongs to the TRAFAC class translation factor GTPase superfamily. Classic translation factor GTPase family. EF-Tu/EF-1A subfamily.

It localises to the cytoplasm. It carries out the reaction GTP + H2O = GDP + phosphate + H(+). In terms of biological role, GTP hydrolase that promotes the GTP-dependent binding of aminoacyl-tRNA to the A-site of ribosomes during protein biosynthesis. In Pyrobaculum aerophilum (strain ATCC 51768 / DSM 7523 / JCM 9630 / CIP 104966 / NBRC 100827 / IM2), this protein is Elongation factor 1-alpha.